The following is a 547-amino-acid chain: NXPE family member 1 (547 aa).

The signal sequence occupies residues 1–21 (MSSNTMLQKTLLILISFSVVT). N-linked (GlcNAc...) asparagine glycans are attached at residues asparagine 39 and asparagine 211.

This sequence belongs to the NXPE family.

The protein resides in the secreted. This Homo sapiens (Human) protein is NXPE family member 1 (NXPE1).